Here is a 362-residue protein sequence, read N- to C-terminus: Homeobox protein Nkx-2.3 (362 aa).

2 disordered regions span residues 126–149 (EAAGDCKTSEDGERPKPRSRRKPR) and 203–222 (QRQDKSLELGTHAPPPPPRR). Basic and acidic residues predominate over residues 132–141 (KTSEDGERPK). Residues 145-204 (RRKPRVLFSQAQVFELERRFKQQRYLSAPEREHLASSLKLTSTQVKIWFQNRRYKCKRQR) constitute a DNA-binding region (homeobox).

Belongs to the NK-2 homeobox family. As to expression, expressed in spleen and intestine. Also expressed in salivary gland and tongue.

The protein resides in the nucleus. In terms of biological role, transcriptional regulator essential for normal development and functions of the small intestine and spleen. Activates directly MADCAM1 expression. Required for homing of lymphocytes in spleen and mucosa-associated lymphoid tissue. May have a role during pharyngeal organogenesis. This Mus musculus (Mouse) protein is Homeobox protein Nkx-2.3 (Nkx2-3).